We begin with the raw amino-acid sequence, 75 residues long: MKLLLFTALVLVVISLIEVEAENERACIPLEKECTKTPGNCCSGLKCDCYRRFEQGVAKGIQCWCIEKDVTYKGV.

Residues 1-21 form the signal peptide; it reads MKLLLFTALVLVVISLIEVEA. Residues 22–25 constitute a propeptide that is removed on maturation; it reads ENER.

It belongs to the neurotoxin 19 (CSTX) family. 06 (U6-Lctx) subfamily. Post-translationally, contains 4 disulfide bonds. Expressed by the venom gland.

It is found in the secreted. The chain is U6-lycotoxin-Ls1d from Lycosa singoriensis (Wolf spider).